We begin with the raw amino-acid sequence, 250 residues long: Probable transcriptional regulatory protein Cpha266_0538 (250 aa).

This sequence belongs to the TACO1 family.

Its subcellular location is the cytoplasm. The chain is Probable transcriptional regulatory protein Cpha266_0538 from Chlorobium phaeobacteroides (strain DSM 266 / SMG 266 / 2430).